We begin with the raw amino-acid sequence, 209 residues long: Kynurenine formamidase (209 aa).

Tryptophan 20 is a substrate binding site. Zn(2+)-binding residues include histidine 50, histidine 54, and aspartate 56. Histidine 60 serves as the catalytic Proton donor/acceptor. 2 residues coordinate Zn(2+): histidine 161 and glutamate 173.

The protein belongs to the Cyclase 1 superfamily. KynB family. As to quaternary structure, homodimer. Requires Zn(2+) as cofactor.

It carries out the reaction N-formyl-L-kynurenine + H2O = L-kynurenine + formate + H(+). The protein operates within amino-acid degradation; L-tryptophan degradation via kynurenine pathway; L-kynurenine from L-tryptophan: step 2/2. In terms of biological role, catalyzes the hydrolysis of N-formyl-L-kynurenine to L-kynurenine, the second step in the kynurenine pathway of tryptophan degradation. The polypeptide is Kynurenine formamidase (Bacillus thuringiensis (strain Al Hakam)).